The chain runs to 130 residues: Large ribosomal subunit protein bL21 (130 aa).

Residues 110–130 (KTAAQPAADEAVAANEVDSEA) are disordered. Low complexity predominate over residues 112–130 (AAQPAADEAVAANEVDSEA).

This sequence belongs to the bacterial ribosomal protein bL21 family. Part of the 50S ribosomal subunit. Contacts protein L20.

Functionally, this protein binds to 23S rRNA in the presence of protein L20. The protein is Large ribosomal subunit protein bL21 of Cyanothece sp. (strain PCC 7425 / ATCC 29141).